Here is a 951-residue protein sequence, read N- to C-terminus: PE-PGRS family protein PE_PGRS3 (951 aa).

The PE domain occupies 4–94 (VIAAPEVIAA…GAYAAAEAAA (91 aa)). The span at 887–919 (CRRQRRADRQRRQRRQRRQSRGHARCRRHRRAA) shows a compositional bias: basic residues. Residues 887–951 (CRRQRRADRQ…GISCSPQMMP (65 aa)) are disordered.

This sequence belongs to the mycobacterial PE family. PGRS subfamily.

Its subcellular location is the cell outer membrane. The protein resides in the secreted. It localises to the cell wall. The protein localises to the cell surface. Functionally, the arginine-rich C-terminal region protrudes from the mycobacterial membrane and mediates M.tuberculosis entry into host epithelial cells. May serve as a bridge between mycobacteria and host cells by interacting with specific host phospholipids and extracting them from host cells, for their direct integration or as a source of phosphate, during phases of TB pathogenesis when M.tuberculosis is short of phosphate supply. The chain is PE-PGRS family protein PE_PGRS3 (PE_PGRS3) from Mycobacterium tuberculosis (strain CDC 1551 / Oshkosh).